Reading from the N-terminus, the 348-residue chain is Alpha-2-HS-glycoprotein (348 aa).

A signal peptide spans 1–18 (MKTLVLLLCFTLLWGCQS). In terms of domain architecture, Cystatin fetuin-A-type 1 spans 19–133 (APQGTGLGFR…QFSVMHTKCH (115 aa)). Disulfide bonds link Cys-32–Cys-339, Cys-89–Cys-100, Cys-114–Cys-132, Cys-146–Cys-149, Cys-208–Cys-219, and Cys-230–Cys-247. The N-linked (GlcNAc...) asparagine glycan is linked to Asn-99. Ser-134 and Ser-138 each carry phosphoserine. The region spanning 144–255 (KVCPHCALLT…TCTAFPTQAN (112 aa)) is the Cystatin fetuin-A-type 2 domain. Asn-156 and Asn-176 each carry an N-linked (GlcNAc...) asparagine glycan. Residues Ser-307, Ser-311, Ser-314, and Ser-316 each carry the phosphoserine modification.

This sequence belongs to the fetuin family. Post-translationally, phosphorylated by FAM20C in the extracellular medium. In terms of tissue distribution, expressed by the liver and secreted in plasma.

It is found in the secreted. The chain is Alpha-2-HS-glycoprotein (AHSG) from Meriones unguiculatus (Mongolian jird).